The sequence spans 303 residues: Ferrochelatase (303 aa).

Fe cation contacts are provided by His-185 and Glu-262.

This sequence belongs to the ferrochelatase family.

The protein resides in the cytoplasm. It catalyses the reaction heme b + 2 H(+) = protoporphyrin IX + Fe(2+). It functions in the pathway porphyrin-containing compound metabolism; protoheme biosynthesis; protoheme from protoporphyrin-IX: step 1/1. Functionally, catalyzes the ferrous insertion into protoporphyrin IX. In Campylobacter jejuni subsp. jejuni serotype O:2 (strain ATCC 700819 / NCTC 11168), this protein is Ferrochelatase.